Consider the following 664-residue polypeptide: DNA mismatch repair protein MutL (664 aa).

This sequence belongs to the DNA mismatch repair MutL/HexB family.

In terms of biological role, this protein is involved in the repair of mismatches in DNA. It is required for dam-dependent methyl-directed DNA mismatch repair. May act as a 'molecular matchmaker', a protein that promotes the formation of a stable complex between two or more DNA-binding proteins in an ATP-dependent manner without itself being part of a final effector complex. The sequence is that of DNA mismatch repair protein MutL from Clostridium beijerinckii (strain ATCC 51743 / NCIMB 8052) (Clostridium acetobutylicum).